The sequence spans 319 residues: Ankyrin repeat domain-containing protein 1 (319 aa).

Positions 63-89 (EKQLEAELKKKKLEQRSKLENLEDLEI) form a coiled coil. ANK repeat units follow at residues 152-181 (YKRTALHRACLEGHLAIVEKLMEAGAQIEF), 185-214 (LESTAIHWACRGGNLEVLKLLLNKGAKISA), 218-247 (LLSTALHVAVRTGHYECAEHLIACEADLNA), 251-280 (EGDTPLHDAVRLNRYKMIRLLIMYGADLTI), and 284-315 (AGKTPMDLVLNWQNGTKAIFDSLKENSYKTSR).

In terms of assembly, interacts with TTN/titin and YBX1.

It localises to the nucleus. Its function is as follows. May play an important role in endothelial cell activation. May act as a nuclear transcription factor that negatively regulates the expression of cardiac genes. The polypeptide is Ankyrin repeat domain-containing protein 1 (ANKRD1) (Oryctolagus cuniculus (Rabbit)).